The primary structure comprises 392 residues: Outer membrane protein assembly factor BamB (392 aa).

The first 19 residues, 1-19 (MQLRKLLLPGLLSVTLLSG), serve as a signal peptide directing secretion. C20 carries the N-palmitoyl cysteine lipid modification. Residue C20 is the site of S-diacylglycerol cysteine attachment.

This sequence belongs to the BamB family. In terms of assembly, part of the Bam complex, which is composed of the outer membrane protein BamA, and four lipoproteins BamB, BamC, BamD and BamE. Monomer. Interacts directly with BamA. The Bam complex has the shape of a hat, with the BamA beta-barrel crown in the outer membrane and the periplasmic brim formed by the BamA POTRA domains and the 4 lipoproteins.

Its subcellular location is the cell outer membrane. In terms of biological role, part of the outer membrane protein assembly complex (Bam), which is involved in assembly and insertion of beta-barrel proteins into the outer membrane. Nonessential member of the complex, which may orient the flexible periplasmic domain of BamA for interaction with other Bam components, chaperones and nascent outer membrane proteins. Efficient substrate folding and insertion into the outer membrane requires all 5 subunits. A lateral gate may open between the first and last strands of the BamA beta-barrel that allows substrate to insert into the outer membrane; comparison of the structures of complete and nearly complete Bam complexes show there is considerable movement of all 5 proteins. The chain is Outer membrane protein assembly factor BamB from Escherichia coli (strain K12).